A 100-amino-acid chain; its full sequence is Small ribosomal subunit protein uS14c (100 aa).

The protein belongs to the universal ribosomal protein uS14 family. Part of the 30S ribosomal subunit.

The protein localises to the plastid. It localises to the chloroplast. Binds 16S rRNA, required for the assembly of 30S particles. This chain is Small ribosomal subunit protein uS14c, found in Nymphaea alba (White water-lily).